The primary structure comprises 156 residues: ATP synthase subunit b (156 aa).

Residues 5-25 (LTLIVQMLVFAAFVLFTMKLV) traverse the membrane as a helical segment.

This sequence belongs to the ATPase B chain family. As to quaternary structure, F-type ATPases have 2 components, F(1) - the catalytic core - and F(0) - the membrane proton channel. F(1) has five subunits: alpha(3), beta(3), gamma(1), delta(1), epsilon(1). F(0) has three main subunits: a(1), b(2) and c(10-14). The alpha and beta chains form an alternating ring which encloses part of the gamma chain. F(1) is attached to F(0) by a central stalk formed by the gamma and epsilon chains, while a peripheral stalk is formed by the delta and b chains.

The protein resides in the cell inner membrane. Functionally, f(1)F(0) ATP synthase produces ATP from ADP in the presence of a proton or sodium gradient. F-type ATPases consist of two structural domains, F(1) containing the extramembraneous catalytic core and F(0) containing the membrane proton channel, linked together by a central stalk and a peripheral stalk. During catalysis, ATP synthesis in the catalytic domain of F(1) is coupled via a rotary mechanism of the central stalk subunits to proton translocation. In terms of biological role, component of the F(0) channel, it forms part of the peripheral stalk, linking F(1) to F(0). The chain is ATP synthase subunit b from Legionella pneumophila (strain Paris).